Here is a 136-residue protein sequence, read N- to C-terminus: Small ribosomal subunit protein uS9 (136 aa).

This sequence belongs to the universal ribosomal protein uS9 family.

The sequence is that of Small ribosomal subunit protein uS9 from Borrelia hermsii (strain HS1 / DAH).